Here is a 379-residue protein sequence, read N- to C-terminus: GDSL esterase/lipase At3g05180 (379 aa).

The N-terminal stretch at methionine 1–serine 27 is a signal peptide. Serine 43 (nucleophile) is an active-site residue. N-linked (GlcNAc...) asparagine glycans are attached at residues asparagine 294 and asparagine 330. Residues aspartate 349 and histidine 352 contribute to the active site.

This sequence belongs to the 'GDSL' lipolytic enzyme family.

Its subcellular location is the secreted. In Arabidopsis thaliana (Mouse-ear cress), this protein is GDSL esterase/lipase At3g05180.